A 399-amino-acid polypeptide reads, in one-letter code: Succinyl-diaminopimelate desuccinylase (399 aa).

Zn(2+) is bound at residue His-80. The active site involves Asp-82. Residue Asp-113 coordinates Zn(2+). Glu-147 functions as the Proton acceptor in the catalytic mechanism. Zn(2+) contacts are provided by Glu-148, Glu-176, and His-366.

It belongs to the peptidase M20A family. DapE subfamily. Homodimer. It depends on Zn(2+) as a cofactor. Co(2+) serves as cofactor.

It catalyses the reaction N-succinyl-(2S,6S)-2,6-diaminopimelate + H2O = (2S,6S)-2,6-diaminopimelate + succinate. It participates in amino-acid biosynthesis; L-lysine biosynthesis via DAP pathway; LL-2,6-diaminopimelate from (S)-tetrahydrodipicolinate (succinylase route): step 3/3. Functionally, catalyzes the hydrolysis of N-succinyl-L,L-diaminopimelic acid (SDAP), forming succinate and LL-2,6-diaminopimelate (DAP), an intermediate involved in the bacterial biosynthesis of lysine and meso-diaminopimelic acid, an essential component of bacterial cell walls. The polypeptide is Succinyl-diaminopimelate desuccinylase (Colwellia psychrerythraea (strain 34H / ATCC BAA-681) (Vibrio psychroerythus)).